Consider the following 190-residue polypeptide: Selenoprotein S (190 aa).

A compositionally biased stretch (basic and acidic residues) spans 1-13 (MEAEDGARVRNED). A disordered region spans residues 1-20 (MEAEDGARVRNEDVPPQNQD). The chain crosses the membrane as a helical span at residues 30–50 (AFMSEYGWYLLFGCVGVYLLI). Residues 58 to 68 (SSTQTRSSSGS) show a composition bias toward low complexity. The tract at residues 58–190 (SSTQTRSSSG…RRGPSAGGUG (133 aa)) is disordered. Positions 79 to 120 (RRQEALEASRRRMQEEQDARAAEFREKQRMLEEEKRRQKIEM) are enriched in basic and acidic residues. Over residues 136–151 (VAQQNTEEAASSSSLR) the composition is skewed to polar residues. Residue U189 is a non-standard amino acid, selenocysteine.

It belongs to the selenoprotein S family.

It is found in the endoplasmic reticulum membrane. It localises to the cytoplasm. Functionally, involved in the degradation process of misfolded endoplasmic reticulum (ER) luminal proteins. Participates in the transfer of misfolded proteins from the ER to the cytosol, where they are destroyed by the proteasome in a ubiquitin-dependent manner. This is Selenoprotein S (vimp) from Danio rerio (Zebrafish).